The primary structure comprises 146 residues: Large ribosomal subunit protein uL15 (146 aa).

Residues 1 to 64 are disordered; that stretch reads MQLNTIKPAI…MPMHRRLPKR (64 aa). Residues 30–39 are compositionally biased toward basic residues; sequence TATKGHKGQK.

Belongs to the universal ribosomal protein uL15 family. As to quaternary structure, part of the 50S ribosomal subunit.

Its function is as follows. Binds to the 23S rRNA. This Geobacter sp. (strain M21) protein is Large ribosomal subunit protein uL15.